The following is a 355-amino-acid chain: uncharacterized protein (355 aa).

Residues 1 to 27 (MESPIRTARRTLPLLIGATCLVLALTG) form the signal peptide. C28 carries the N-palmitoyl cysteine lipid modification. C28 carries the S-diacylglycerol cysteine lipid modification. Residues 33-53 (GPAQARPTPSASTSPKQAPAL) are disordered. Positions 39-48 (PTPSASTSPK) are enriched in polar residues.

The protein resides in the cell membrane. This is an uncharacterized protein from Streptomyces coelicolor (strain ATCC BAA-471 / A3(2) / M145).